The sequence spans 310 residues: tRNA-cytidine(32) 2-sulfurtransferase (310 aa).

The short motif at 45 to 50 is the PP-loop motif element; it reads SGGKDS. [4Fe-4S] cluster is bound by residues C120, C123, and C211.

Belongs to the TtcA family. As to quaternary structure, homodimer. Mg(2+) serves as cofactor. The cofactor is [4Fe-4S] cluster.

It localises to the cytoplasm. It carries out the reaction cytidine(32) in tRNA + S-sulfanyl-L-cysteinyl-[cysteine desulfurase] + AH2 + ATP = 2-thiocytidine(32) in tRNA + L-cysteinyl-[cysteine desulfurase] + A + AMP + diphosphate + H(+). Its pathway is tRNA modification. In terms of biological role, catalyzes the ATP-dependent 2-thiolation of cytidine in position 32 of tRNA, to form 2-thiocytidine (s(2)C32). The sulfur atoms are provided by the cysteine/cysteine desulfurase (IscS) system. The sequence is that of tRNA-cytidine(32) 2-sulfurtransferase from Shewanella baltica (strain OS195).